Here is a 225-residue protein sequence, read N- to C-terminus: Cobalt transport protein CbiM (225 aa).

Transmembrane regions (helical) follow at residues V7–A27, P43–P63, L76–I96, T108–F128, F143–L163, and F175–V195.

The protein belongs to the CbiM family. In terms of assembly, forms an energy-coupling factor (ECF) transporter complex composed of an ATP-binding protein (A component, CbiO), a transmembrane protein (T component, CbiQ) and 2 possible substrate-capture proteins (S components, CbiM and CbiN) of unknown stoichimetry.

Its subcellular location is the cell inner membrane. It participates in cofactor biosynthesis; adenosylcobalamin biosynthesis. Functionally, part of the energy-coupling factor (ECF) transporter complex CbiMNOQ involved in cobalt import. The protein is Cobalt transport protein CbiM of Sorangium cellulosum (strain So ce56) (Polyangium cellulosum (strain So ce56)).